The sequence spans 256 residues: MNNIWWQTKGQGNVHLVLLHGWGLNAEVWRCIDEELSSHFTLHLVDLPGFGRSRGFGALSLADMAEAVLRQAPDKAIWLGWSLGGLVASQIALTHPERVQALVTVASSPCFSARDEWPGIKPDVLAGFQQQLSDDFQRTVERFLALQTMGTETARQDARALKKTVLALPMPEVDVLNGGLEILKTVDLRQPLQNVSMPFLRLYGYLDGLVPRKVVPMLDKLWPHSESYIFAKAAHAPFISHPAEFCRMLVALKQRV.

Residues H15–P242 enclose the AB hydrolase-1 domain. Substrate is bound by residues W22, S82–L83, and F143–Q147. The Nucleophile role is filled by S82. Active-site residues include D207 and H235. A substrate-binding site is contributed by H235.

This sequence belongs to the AB hydrolase superfamily. Carboxylesterase BioH family. Monomer.

It is found in the cytoplasm. It catalyses the reaction 6-carboxyhexanoyl-[ACP] methyl ester + H2O = 6-carboxyhexanoyl-[ACP] + methanol + H(+). It participates in cofactor biosynthesis; biotin biosynthesis. Its function is as follows. The physiological role of BioH is to remove the methyl group introduced by BioC when the pimeloyl moiety is complete. It allows to synthesize pimeloyl-ACP via the fatty acid synthetic pathway through the hydrolysis of the ester bonds of pimeloyl-ACP esters. The polypeptide is Pimeloyl-[acyl-carrier protein] methyl ester esterase (Escherichia coli O17:K52:H18 (strain UMN026 / ExPEC)).